We begin with the raw amino-acid sequence, 126 residues long: Glycine cleavage system H protein (126 aa).

One can recognise a Lipoyl-binding domain in the interval 22-104; that stretch reads VVFIGITDYA…YGAGWIIKVK (83 aa). K63 bears the N6-lipoyllysine mark.

It belongs to the GcvH family. In terms of assembly, the glycine cleavage system is composed of four proteins: P, T, L and H. The cofactor is (R)-lipoate.

In terms of biological role, the glycine cleavage system catalyzes the degradation of glycine. The H protein shuttles the methylamine group of glycine from the P protein to the T protein. The polypeptide is Glycine cleavage system H protein (Porphyromonas gingivalis (strain ATCC 33277 / DSM 20709 / CIP 103683 / JCM 12257 / NCTC 11834 / 2561)).